We begin with the raw amino-acid sequence, 508 residues long: Anaerobic nitric oxide reductase transcription regulator NorR (508 aa).

D56 bears the 4-aspartylphosphate mark. Residues 186-415 form the Sigma-54 factor interaction domain; it reads MIGQSPAMAR…LEHAIHRAAV (230 aa). Residues 214-221 and 277-286 each bind ATP; these read GETGVGKE and ADQGTLFLDE. Positions 483–502 form a DNA-binding region, H-T-H motif; it reads WAATARALELDSGNLHRLAK.

It participates in nitrogen metabolism; nitric oxide reduction. Functionally, required for the expression of anaerobic nitric oxide (NO) reductase, acts as a transcriptional activator for at least the norVW operon. Activation also requires sigma-54. This is Anaerobic nitric oxide reductase transcription regulator NorR from Aeromonas hydrophila subsp. hydrophila (strain ATCC 7966 / DSM 30187 / BCRC 13018 / CCUG 14551 / JCM 1027 / KCTC 2358 / NCIMB 9240 / NCTC 8049).